Here is a 558-residue protein sequence, read N- to C-terminus: Formate--tetrahydrofolate ligase (558 aa).

66–73 is an ATP binding site; that stretch reads TPAGEGKT.

The protein belongs to the formate--tetrahydrofolate ligase family.

The catalysed reaction is (6S)-5,6,7,8-tetrahydrofolate + formate + ATP = (6R)-10-formyltetrahydrofolate + ADP + phosphate. It functions in the pathway one-carbon metabolism; tetrahydrofolate interconversion. The protein is Formate--tetrahydrofolate ligase of Neisseria meningitidis serogroup B (strain ATCC BAA-335 / MC58).